A 296-amino-acid polypeptide reads, in one-letter code: Diaminopimelate epimerase (296 aa).

3 residues coordinate substrate: N17, Q49, and N69. The Proton donor role is filled by C78. Residues 79–80 (GN), N171, N205, and 223–224 (ER) contribute to the substrate site. The active-site Proton acceptor is C232. Position 233 to 234 (233 to 234 (GT)) interacts with substrate.

This sequence belongs to the diaminopimelate epimerase family. Homodimer.

The protein resides in the cytoplasm. It carries out the reaction (2S,6S)-2,6-diaminopimelate = meso-2,6-diaminopimelate. The protein operates within amino-acid biosynthesis; L-lysine biosynthesis via DAP pathway; DL-2,6-diaminopimelate from LL-2,6-diaminopimelate: step 1/1. Functionally, catalyzes the stereoinversion of LL-2,6-diaminopimelate (L,L-DAP) to meso-diaminopimelate (meso-DAP), a precursor of L-lysine and an essential component of the bacterial peptidoglycan. The sequence is that of Diaminopimelate epimerase from Methylorubrum extorquens (strain CM4 / NCIMB 13688) (Methylobacterium extorquens).